The following is a 207-amino-acid chain: Large ribosomal subunit protein uL4 (207 aa).

A disordered region spans residues 49–78; it reads HAVKNRSAVRGGGKKPWRQKGTGRARQGSI. Basic residues predominate over residues 60 to 71; the sequence is GGKKPWRQKGTG.

The protein belongs to the universal ribosomal protein uL4 family. Part of the 50S ribosomal subunit.

In terms of biological role, one of the primary rRNA binding proteins, this protein initially binds near the 5'-end of the 23S rRNA. It is important during the early stages of 50S assembly. It makes multiple contacts with different domains of the 23S rRNA in the assembled 50S subunit and ribosome. Its function is as follows. Forms part of the polypeptide exit tunnel. The sequence is that of Large ribosomal subunit protein uL4 from Ligilactobacillus salivarius (strain UCC118) (Lactobacillus salivarius).